Consider the following 248-residue polypeptide: Pulmonary surfactant-associated protein A (248 aa).

A signal peptide spans 1–20 (MSLCSLAFTLFLTVVAGIKC). The 73-residue stretch at 28–100 (GSPGIPGAPG…PGERGLPGFP (73 aa)) folds into the Collagen-like domain. A 4-hydroxyproline mark is found at proline 30, proline 33, proline 36, proline 42, proline 54, proline 57, proline 63, proline 67, proline 70, and proline 76. The interval 31–99 (GIPGAPGNHG…EPGERGLPGF (69 aa)) is disordered. Basic and acidic residues predominate over residues 42 to 51 (PGRDGRDGVK). The span at 54–65 (PGPPGPMGPPGG) shows a compositional bias: pro residues. Over residues 69–82 (LPGRDGLPGAPGAP) the composition is skewed to low complexity. Basic and acidic residues predominate over residues 84–93 (ERGDKGEPGE). The 116-residue stretch at 133–248 (SVGDKVFSTN…LQYRLAVCEF (116 aa)) folds into the C-type lectin domain. Intrachain disulfides connect cysteine 155/cysteine 246 and cysteine 224/cysteine 238. N-linked (GlcNAc...) asparagine glycosylation is present at asparagine 207. 4 residues coordinate Ca(2+): glutamate 215, arginine 217, asparagine 234, and aspartate 235.

This sequence belongs to the SFTPA family. As to quaternary structure, oligomeric complex of 6 set of homotrimers.

It localises to the secreted. The protein resides in the extracellular space. It is found in the extracellular matrix. Its subcellular location is the surface film. In presence of calcium ions, it binds to surfactant phospholipids and contributes to lower the surface tension at the air-liquid interface in the alveoli of the mammalian lung and is essential for normal respiration. Enhances the expression of MYO18A/SP-R210 on alveolar macrophages. The protein is Pulmonary surfactant-associated protein A (Sftpa1) of Rattus norvegicus (Rat).